Consider the following 900-residue polypeptide: Alanine--tRNA ligase (900 aa).

Positions 604, 608, 708, and 712 each coordinate Zn(2+).

It belongs to the class-II aminoacyl-tRNA synthetase family. The cofactor is Zn(2+).

The protein localises to the cytoplasm. It catalyses the reaction tRNA(Ala) + L-alanine + ATP = L-alanyl-tRNA(Ala) + AMP + diphosphate. In terms of biological role, catalyzes the attachment of alanine to tRNA(Ala) in a two-step reaction: alanine is first activated by ATP to form Ala-AMP and then transferred to the acceptor end of tRNA(Ala). Also edits incorrectly charged Ser-tRNA(Ala) and Gly-tRNA(Ala) via its editing domain. The polypeptide is Alanine--tRNA ligase (Saccharolobus islandicus (strain M.14.25 / Kamchatka #1) (Sulfolobus islandicus)).